Consider the following 419-residue polypeptide: Phosphoglycerate kinase (419 aa).

Substrate-binding positions include 21–23 (DFN), Arg36, 60–63 (HLGD), Arg137, and Arg174. ATP-binding positions include Lys225, Gly316, Glu347, and 376–379 (GGDS).

The protein belongs to the phosphoglycerate kinase family. As to quaternary structure, monomer.

It localises to the cytoplasm. It carries out the reaction (2R)-3-phosphoglycerate + ATP = (2R)-3-phospho-glyceroyl phosphate + ADP. Its pathway is carbohydrate degradation; glycolysis; pyruvate from D-glyceraldehyde 3-phosphate: step 2/5. The protein is Phosphoglycerate kinase (pgk) of Treponema pallidum (strain Nichols).